Here is a 510-residue protein sequence, read N- to C-terminus: Arginine biosynthesis bifunctional protein ArgJ, mitochondrial (510 aa).

The segment covering 57 to 70 has biased composition (polar residues); the sequence is TSTNEPSAATTNVP. Residues 57-76 are disordered; the sequence is TSTNEPSAATTNVPHPQEAP. Substrate-binding residues include threonine 222, lysine 248, threonine 267, and glutamate 364. Catalysis depends on threonine 267, which acts as the Nucleophile.

Belongs to the ArgJ family. As to quaternary structure, heterodimer of an alpha and a beta chain. The alpha and beta chains are autoproteolytically processed from a single precursor protein within the mitochondrion.

It is found in the mitochondrion matrix. The catalysed reaction is N(2)-acetyl-L-ornithine + L-glutamate = N-acetyl-L-glutamate + L-ornithine. It catalyses the reaction L-glutamate + acetyl-CoA = N-acetyl-L-glutamate + CoA + H(+). Its pathway is amino-acid biosynthesis; L-arginine biosynthesis; L-ornithine and N-acetyl-L-glutamate from L-glutamate and N(2)-acetyl-L-ornithine (cyclic): step 1/1. The protein operates within amino-acid biosynthesis; L-arginine biosynthesis; N(2)-acetyl-L-ornithine from L-glutamate: step 1/4. In terms of biological role, catalyzes two activities which are involved in the cyclic version of arginine biosynthesis: the synthesis of acetylglutamate from glutamate and acetyl-CoA, and of ornithine by transacetylation between acetylornithine and glutamate. This chain is Arginine biosynthesis bifunctional protein ArgJ, mitochondrial, found in Malassezia globosa (strain ATCC MYA-4612 / CBS 7966) (Dandruff-associated fungus).